A 333-amino-acid polypeptide reads, in one-letter code: Nucleoid-associated protein PSPPH_1145 (333 aa).

It belongs to the YejK family.

It is found in the cytoplasm. It localises to the nucleoid. This chain is Nucleoid-associated protein PSPPH_1145, found in Pseudomonas savastanoi pv. phaseolicola (strain 1448A / Race 6) (Pseudomonas syringae pv. phaseolicola (strain 1448A / Race 6)).